The primary structure comprises 1153 residues: MYNPIGSAEAREPAELPAAVAAELERLEGRLRQLAGAEARRHLAVLGEAGAARVLRAVAESRRVRTLPGFIKYLAKREAAITRRDARGVPTALSAPAFISGPSREEESVYTQLFDNEVQMYDQSPSNEMATSLSNHGMVEVGSPNQQMPFHLHGNGGSVRQIARLVPQLAQLTVESPCGHTSSVSQNQGCIEVGTPTQAMVSPGLNQMALPCRCMPSGLQNYIEIDSPIQPMISTPRRVSTPSSVQDISRLIENMAGPSVSPPSPITAMPQNPTTTCHTTDNALREAASPQMLALEELGFRKIFMVFAYLASEKIENVLSVDYIRSLKFLSMAQFESQIWRTFGHKYIAASDRAKNLDSDPGMTKVYHCNVAIRGDTVVKIFKGPYIENTRTHLQKVVGDDNVLVVKFMGKLSDTKTDFSTYCEHYHKVAEDGIVLGLRRYRFFVYKDGGKEEKLKQEKIEDKNKCTSPVMCYFVRTESGWNMDEPYILSGRTVGQARELFMHISSAPTLAKYMARFALILSKTITWDADLSAVYVRRIKDEPCMDRHGNVVHKDQEPLIHTDGTGLVSVDLALNCPTSIFKGKFLKPQPLLMQFRLFYNGSAVKGTVLVDRRLPPATILIRPSMVKIETHPELSGVRSVNSSEIVSARNAKKSLSGVQSVNSFEIVSTSNRPRRTLTSRFLITLLCYGGVPEEYFLELLQSAIEGAENACYDYEDALRIAFSYADMEDSMSARMILSGIPLEESYLQHRLDFMAQQERKGIKQGKIPIDECYYLMDTTDPTGTLRPNEVCVILENGQFSGDVLVYKHPGLHFGDIHVLKATYIRDLEKEYVGYAKYAILFPISGPRSLADEMANSDFDGDIYWVSKNPKLLEHFKPSEPWVQAIKPKKTKQKKPQDCNESKLERLLFHEFLKTRFTPSFALGTAADSWLAYMDRLLTDSLDEIEKKLIEEKMLKLVDLYYLALDAPKTGNKVNIPSDLMVKQYPHFMGRSFSYHSSSILGQIYDKAEDVESLRSCNVQPIGVSLLPCFMEREAPPAARHLWQHRYEEYLTDSTMLYRAMVDKEERNMKFQELYEKYKHMLYDASEFEQTQRDPDDVFSEACVIYQIVYEKARWSNDASRCGFAWKVAGRALCHFYALKNEGDTALCSLPLLR.

Belongs to the RdRP family. Expressed in shoot apical meristem (SAM) and panicles.

The catalysed reaction is RNA(n) + a ribonucleoside 5'-triphosphate = RNA(n+1) + diphosphate. In terms of biological role, probably involved in the RNA silencing pathway and required for the generation of small interfering RNAs (siRNAs). In Oryza sativa subsp. japonica (Rice), this protein is Probable RNA-dependent RNA polymerase 3 (RDR3).